Here is a 251-residue protein sequence, read N- to C-terminus: D-aminoacyl-tRNA deacylase (251 aa).

It belongs to the DtdA deacylase family. As to quaternary structure, monomer. The cofactor is Zn(2+).

It catalyses the reaction a D-aminoacyl-tRNA + H2O = a tRNA + a D-alpha-amino acid + H(+). It carries out the reaction glycyl-tRNA(Ala) + H2O = tRNA(Ala) + glycine + H(+). D-aminoacyl-tRNA deacylase with broad substrate specificity. By recycling D-aminoacyl-tRNA to D-amino acids and free tRNA molecules, this enzyme counteracts the toxicity associated with the formation of D-aminoacyl-tRNA entities in vivo. The polypeptide is D-aminoacyl-tRNA deacylase (Pyrobaculum calidifontis (strain DSM 21063 / JCM 11548 / VA1)).